A 153-amino-acid polypeptide reads, in one-letter code: Large ribosomal subunit protein uL30 (153 aa).

Belongs to the universal ribosomal protein uL30 family. As to quaternary structure, part of the 50S ribosomal subunit.

The chain is Large ribosomal subunit protein uL30 from Methanosarcina mazei (strain ATCC BAA-159 / DSM 3647 / Goe1 / Go1 / JCM 11833 / OCM 88) (Methanosarcina frisia).